The primary structure comprises 609 residues: Dihydroxy-acid dehydratase (609 aa).

Asp81 provides a ligand contact to Mg(2+). Residue Cys122 coordinates [2Fe-2S] cluster. Mg(2+) contacts are provided by Asp123 and Lys124. The residue at position 124 (Lys124) is an N6-carboxylysine. Cys195 lines the [2Fe-2S] cluster pocket. A Mg(2+)-binding site is contributed by Glu491. Ser517 (proton acceptor) is an active-site residue.

The protein belongs to the IlvD/Edd family. In terms of assembly, homodimer. [2Fe-2S] cluster is required as a cofactor. Requires Mg(2+) as cofactor.

It catalyses the reaction (2R)-2,3-dihydroxy-3-methylbutanoate = 3-methyl-2-oxobutanoate + H2O. The enzyme catalyses (2R,3R)-2,3-dihydroxy-3-methylpentanoate = (S)-3-methyl-2-oxopentanoate + H2O. It participates in amino-acid biosynthesis; L-isoleucine biosynthesis; L-isoleucine from 2-oxobutanoate: step 3/4. The protein operates within amino-acid biosynthesis; L-valine biosynthesis; L-valine from pyruvate: step 3/4. In terms of biological role, functions in the biosynthesis of branched-chain amino acids. Catalyzes the dehydration of (2R,3R)-2,3-dihydroxy-3-methylpentanoate (2,3-dihydroxy-3-methylvalerate) into 2-oxo-3-methylpentanoate (2-oxo-3-methylvalerate) and of (2R)-2,3-dihydroxy-3-methylbutanoate (2,3-dihydroxyisovalerate) into 2-oxo-3-methylbutanoate (2-oxoisovalerate), the penultimate precursor to L-isoleucine and L-valine, respectively. This Acinetobacter baumannii (strain ATCC 17978 / DSM 105126 / CIP 53.77 / LMG 1025 / NCDC KC755 / 5377) protein is Dihydroxy-acid dehydratase.